The sequence spans 147 residues: Hordoindoline-B1 (147 aa).

Residues 1–19 (MKTLFLLAILALVASTTFA) form the signal peptide. A propeptide spanning residues 20-28 (QYSVGGGYN) is cleaved from the precursor.

Post-translationally, five disulfide bonds are present. Found in endosperm and aleurone layer of developing kernels, but not in the embryo.

The protein localises to the membrane. The protein resides in the secreted. It localises to the extracellular space. In terms of biological role, acts as a membranotoxin, probably through its antibacterial and antifungal activities, contributing to the defense mechanism of the plant against predators. Forms monovalent cation-selective ion channels in membranes. Contributes to grain texture and hardness. The chain is Hordoindoline-B1 (HINB-1) from Hordeum vulgare (Barley).